The sequence spans 568 residues: Archaeosine synthase subunit alpha (568 aa).

One can recognise a PUA domain in the interval 496–565 (YDALKSYWVK…AKKGVAVKVR (70 aa)).

It belongs to the archaeosine synthase type 1 family. As to quaternary structure, forms a robust complex with the archaeosine synthase beta subunit RaSEA, likely an alpha(2)beta(2) heterotetrameric structure. Formation of this complex highly increases lysine transfer activity.

It catalyses the reaction 7-cyano-7-carbaguanosine(15) in tRNA + L-lysine = 7-N-[(5S)-5-amino-5-carboxypentyl]formamidino-7-deazaguanosine(15) in tRNA. It functions in the pathway tRNA modification; archaeosine-tRNA biosynthesis. Functions in the biosynthesis of archaeosine, a modified nucleoside present in the dihydrouridine loop (D-loop) of archaeal tRNAs. Catalyzes the addition of L-lysine to the cyano group of 7-cyano-7-deazaguanine (preQ0)-modified tRNAs at position 15, to generate q0kN15-tRNA, a q0N lysine adduct identified as 7-N-[(5S)-5-amino-5-carboxypentyl]formamidino-7-deazaguanosine. This Thermococcus kodakarensis (strain ATCC BAA-918 / JCM 12380 / KOD1) (Pyrococcus kodakaraensis (strain KOD1)) protein is Archaeosine synthase subunit alpha.